Here is a 1720-residue protein sequence, read N- to C-terminus: 182 kDa tankyrase-1-binding protein (1720 aa).

The disordered stretch occupies residues Met-1–Ala-137. Ser-14 bears the Phosphoserine mark. The segment covering Ser-117–Leu-127 has biased composition (basic and acidic residues). Phosphothreonine is present on Thr-131. Ser-178 and Ser-220 each carry phosphoserine. Disordered regions lie at residues Ser-185–Trp-472 and Arg-485–Glu-595. The interval Glu-209 to Arg-1563 is acidic. Residues Gln-232–Asn-243 are compositionally biased toward basic and acidic residues. Thr-238 carries the post-translational modification Phosphothreonine. The span at Val-266–Ala-287 shows a compositional bias: polar residues. Phosphoserine occurs at positions 286 and 300. A compositionally biased stretch (low complexity) spans Pro-296–Ser-316. A compositionally biased stretch (polar residues) spans Glu-317–Ser-327. Ser-429 and Ser-437 each carry phosphoserine. A compositionally biased stretch (polar residues) spans Thr-449–Ala-459. Residues Ser-496 and Ser-500 each carry the phosphoserine modification. The segment covering Ile-502–Ala-518 has biased composition (low complexity). Thr-503 and Thr-533 each carry phosphothreonine. 6 positions are modified to phosphoserine: Ser-539, Ser-568, Ser-602, Ser-673, Ser-692, and Ser-713. Disordered stretches follow at residues Thr-659–Gly-720, Gly-734–Lys-924, and Ser-955–Gly-1081. Residues Ser-742 to Ser-758 show a composition bias toward low complexity. A phosphoserine mark is found at Ser-763, Ser-796, Ser-807, Ser-845, Ser-866, Ser-871, Ser-876, Ser-887, Ser-912, Ser-976, Ser-980, Ser-1006, Ser-1017, and Ser-1022. Residues Phe-840–Ser-866 are compositionally biased toward basic and acidic residues. Positions Phe-991–Glu-1014 are enriched in basic and acidic residues. Basic and acidic residues predominate over residues His-1027–Gly-1039. Ser-1047, Ser-1063, Ser-1084, Ser-1096, Ser-1126, Ser-1131, Ser-1171, Ser-1212, Ser-1241, and Ser-1246 each carry phosphoserine. Residues Ala-1128–Asp-1153 are disordered. The tract at residues Leu-1198–Gly-1255 is disordered. Over residues Glu-1208–Asp-1230 the composition is skewed to basic and acidic residues. Thr-1275 carries the phosphothreonine modification. A phosphoserine mark is found at Ser-1290, Ser-1321, Ser-1324, Ser-1373, and Ser-1375. The disordered stretch occupies residues Gly-1358–Glu-1546. Residues Glu-1402–Thr-1411 show a composition bias toward polar residues. Residues Ser-1425, Ser-1429, Ser-1437, Ser-1440, Ser-1442, Ser-1463, and Ser-1466 each carry the phosphoserine modification. The span at Ala-1428–Gly-1457 shows a compositional bias: polar residues. A tankyrase-binding region spans residues Ser-1440–Pro-1532. The segment covering Leu-1477–Pro-1489 has biased composition (low complexity). Residue Ser-1496 is modified to Phosphoserine. Residues Trp-1515–Ala-1527 are compositionally biased toward polar residues. Ser-1549 carries the phosphoserine modification. At Thr-1554 the chain carries Phosphothreonine. Positions Asn-1567–Ile-1720 are disordered. Over residues Leu-1568–Pro-1577 the composition is skewed to basic residues. The span at Ser-1593–Ala-1606 shows a compositional bias: basic and acidic residues. Ser-1611, Ser-1612, and Ser-1622 each carry phosphoserine. Positions Pro-1620–Arg-1626 match the Nuclear localization signal motif. Lys-1635 carries the post-translational modification N6-methyllysine. Phosphoserine is present on residues Ser-1643 and Ser-1657. Over residues Arg-1656 to Gln-1670 the composition is skewed to basic and acidic residues. Residues Lys-1671–Leu-1690 are compositionally biased toward low complexity. A Phosphoserine modification is found at Ser-1706. Positions Lys-1714–Lys-1719 match the Nuclear localization signal motif.

In terms of assembly, binds to the ANK repeat domain of TNKS1 and TNKS2. In terms of processing, ADP-ribosylated by TNKS1.

Its subcellular location is the nucleus. The protein localises to the cytoplasm. The protein resides in the cytoskeleton. It localises to the chromosome. This chain is 182 kDa tankyrase-1-binding protein (Tnks1bp1), found in Mus musculus (Mouse).